The following is a 146-amino-acid chain: Snaclec CTL-Eoc124 (146 aa).

The first 23 residues, 1-23 (MGRFISVSFGLLVVFLSLSGTGA), serve as a signal peptide directing secretion. 3 cysteine pairs are disulfide-bonded: C25/C36, C53/C142, and C119/C134. The C-type lectin domain occupies 32–143 (YQGHCYRVFN…CSRTNNVACK (112 aa)).

Belongs to the snaclec family. As to quaternary structure, heterodimer; disulfide-linked. Expressed by the venom gland.

It is found in the secreted. In terms of biological role, interferes with one step of hemostasis (modulation of platelet aggregation, or coagulation cascade, for example). This chain is Snaclec CTL-Eoc124, found in Echis ocellatus (Ocellated saw-scaled viper).